Here is a 1044-residue protein sequence, read N- to C-terminus: MMAAEAGGEEGGPVTAGAAGGGAAAASGAYPAVCRVKIPAALPVAAAAPFPGLAEAGVAATLGGGAALGSGFLGAGSVAGTPGGVGLSAGGAAAGVAGVAAAAAGAGGEMAFAKGTTSLPTETFGAGGGFPPLPPPPPQLPTLGAGLGTVDEGDSLDGPEYEEEEVAIPLTAPPTNQWYHGKLDRTIAEERLRQAGKSGSYLIRESDRRPGSFVLSFLSQTNVVNHFRIIAMCGDYYIGGRRFSSLSDLIGYYSHVSCLLKGEKLLYPVAPPEPVEDRRRVRAILPYTKVPDTDEISFLKGDMFIVHNELEDGWMWVTNLRTDEQGLIVEDLVEEVGREEDPHEGKIWFHGKISKQEAYNLLMTVGQACSFLVRPSDNTPGDYSLYFRTSENIQRFKICPTPNNQFMMGGRYYNSIGDIIDHYRKEQIVEGYYLKEPVPMQDQEQVLNDAVDGKEIYNTIRRKTKDAFYKNIVKKGYLLKKGKGKRWKNLYFILEGSDAQLIYFESEKRATKPKGLIDLSVCSVYVVHDSLFGRPNCFQIVVQHFSEEHYIFYFAGETPEQAEDWMKGLQAFCNLRKSSPGTSNKRLRQVSSLILHIEEAHKLPVKHFTNPYCNIYLNSVQVAKTHAREGQNPVWSEEFVFDDLPPDINRFEITLSNKTKKSKDPDILFMRCQLSRLQKGHATDEWFLLSSHIPLKGIEPGSLRVRARYSMEKIMPEEEYSEFKELILQKELHVVYALSHVCGQDRTLLASILLKIFLHEKLESLLLCTLNDREISMEDEATTLFRATTLASTLMEQSMKATATQFVHHALKDSILRIMESKQSCELSPSKLEKNEDVNTNLAHLLNILSELVEKIFMASEILPPTLRYIYGCLQKSVQHKWPTNTTMRTRVVSGFVFLRLICPAILNPRMFNIISDSPSPIAARTLTLVAKSVQNLANLVEFGAKEPYMEGVNPFIKSNKHRMIMFLDELGNVPELPDTTEHSRTDLCRDLAALHEICVAHSDELRTLSNERGAQQHVLKKLLAITELLQQKQNQYTKTNDVR.

Met1 is subject to N-acetylmethionine. Residues Met1–Glu160 are hydrophobic. The SH2 1 domain occupies Trp178 to Val269. The 63-residue stretch at Glu276–Arg338 folds into the SH3 domain. The region spanning Trp348–Val438 is the SH2 2 domain. The region spanning Asn471 to Asn574 is the PH domain. Positions Asn574 to Phe687 constitute a C2 domain. Tyr612 is subject to Phosphotyrosine. 2 consecutive repeats follow at residues Pro646 to Asp664 and Pro665 to Thr683. The Ras-GAP domain occupies Lys761–Leu971. Ser828 bears the Phosphoserine mark.

As to quaternary structure, interacts with SQSTM1. Interacts with SPSB1; the interaction does not promote degradation. Interacts with CAV2 (tyrosine phosphorylated form). Directly interacts with NCK1. Interacts with PDGFRB (tyrosine phosphorylated). Interacts (via SH2 domain) with the 'Tyr-9' phosphorylated form of PDPK1. Interacts with tyrosine-phosphorylated EPHB4. Post-translationally, phosphorylated by SRC and LCK. The phosphorylation SRC inhibits its ability to stimulate the Ras-GTPase activity, whereas phosphorylation by LCK does not display any effect on stimulation activity.

The protein resides in the cytoplasm. Its function is as follows. Inhibitory regulator of the Ras-cyclic AMP pathway. Stimulates the GTPase of normal but not oncogenic Ras p21. This chain is Ras GTPase-activating protein 1 (RASA1), found in Bos taurus (Bovine).